A 250-amino-acid chain; its full sequence is Sulfate transporter CysZ (250 aa).

Helical transmembrane passes span 27–47, 64–84, 150–170, and 210–230; these read FVVL…YYLF, FLSW…LATF, FLLL…WFLF, and MLVA…PVAV.

Belongs to the CysZ family.

The protein resides in the cell inner membrane. In terms of biological role, high affinity, high specificity proton-dependent sulfate transporter, which mediates sulfate uptake. Provides the sulfur source for the cysteine synthesis pathway. In Vibrio cholerae serotype O1 (strain ATCC 39315 / El Tor Inaba N16961), this protein is Sulfate transporter CysZ.